We begin with the raw amino-acid sequence, 581 residues long: ATP-dependent lipid A-core flippase (581 aa).

Transmembrane regions (helical) follow at residues 15–35, 62–82, 152–172, 252–272, and 274–294; these read LWPI…ALII, ISIW…SSGF, IIGL…VLII, IIIQ…SSLP, and IIDE…IALM. The ABC transmembrane type-1 domain maps to 27 to 309; the sequence is IISIVALIIN…LTNVNANFQK (283 aa). Positions 341 to 577 constitute an ABC transporter domain; sequence IKFKNITFTY…KGVYAQIYRL (237 aa). An ATP-binding site is contributed by 375–382; sequence GSSGAGKS.

This sequence belongs to the ABC transporter superfamily. Lipid exporter (TC 3.A.1.106) family. Homodimer.

It is found in the cell membrane. The catalysed reaction is ATP + H2O + lipid A-core oligosaccharideSide 1 = ADP + phosphate + lipid A-core oligosaccharideSide 2.. In terms of biological role, involved in lipopolysaccharide (LPS) biosynthesis. Translocates lipid A-core from the inner to the outer leaflet of the inner membrane. Transmembrane domains (TMD) form a pore in the inner membrane and the ATP-binding domain (NBD) is responsible for energy generation. The chain is ATP-dependent lipid A-core flippase from Wigglesworthia glossinidia brevipalpis.